The primary structure comprises 334 residues: Transcription factor MYB92 (334 aa).

2 HTH myb-type domains span residues Asp9–Leu61 and Arg62–Leu116. 2 DNA-binding regions (H-T-H motif) span residues Trp37–Leu61 and Trp89–Leu112.

In terms of assembly, interacts with FBX5. In terms of tissue distribution, highly expressed in roots and at lower levels in stems, flowers and siliques.

It localises to the nucleus. In terms of biological role, probable transcription factor. The protein is Transcription factor MYB92 of Arabidopsis thaliana (Mouse-ear cress).